Consider the following 382-residue polypeptide: cAMP-dependent protein kinase type I-alpha regulatory subunit (382 aa).

A2 carries the post-translational modification N-acetylalanine. The dimerization and phosphorylation stretch occupies residues 2-136 (ATSSSSSSEE…AALAKAIEKN (135 aa)). The interval 62 to 96 (TKQLLNQQKSGSRSDSREDEISPPPPMNPVVKGRR) is disordered. A Pseudophosphorylation motif motif is present at residues 97–101 (RRGAI). Residues 138–255 (LFAH…SKVS), E203, R212, 256–382 (ILES…SLSV), E327, and R336 contribute to the 3',5'-cyclic AMP site.

The protein belongs to the cAMP-dependent kinase regulatory chain family. In terms of assembly, the inactive form of the enzyme is composed of two regulatory chains and two catalytic chains. Activation by cAMP produces two active catalytic monomers and a regulatory dimer that binds four cAMP molecules. Post-translationally, the pseudophosphorylation site binds to the substrate-binding region of the catalytic chain but is not phosphorylated. The physiological significance of phosphorylations by other kinases is unclear.

It localises to the cell membrane. This is cAMP-dependent protein kinase type I-alpha regulatory subunit (PRKAR1A) from Gallus gallus (Chicken).